We begin with the raw amino-acid sequence, 277 residues long: DNA polymerase epsilon subunit C (277 aa).

Polar residues-rich tracts occupy residues 1–16 (MSSPMPQSSLNNSQVA) and 24–39 (ETPSTTPPMISNTNTP). The tract at residues 1–91 (MSSPMPQSSL…EEEEEEESLS (91 aa)) is disordered. Acidic residues predominate over residues 69 to 89 (ENEDDDEQEEEEEEEEEEEES).

As to quaternary structure, heterotetramer. Consists of four subunits: POL2, DPB2, DPB3 and DPB4.

Its subcellular location is the nucleus. In terms of biological role, as accessory component of the DNA polymerase epsilon (DNA polymerase II) participates in chromosomal DNA replication. This Debaryomyces hansenii (strain ATCC 36239 / CBS 767 / BCRC 21394 / JCM 1990 / NBRC 0083 / IGC 2968) (Yeast) protein is DNA polymerase epsilon subunit C (DPB3).